The sequence spans 381 residues: UDP-N-acetylglucosamine--N-acetylmuramyl-(pentapeptide) pyrophosphoryl-undecaprenol N-acetylglucosamine transferase (381 aa).

Residues 10 to 12, Asn-124, Arg-165, Ser-207, Ile-263, and Gln-308 contribute to the UDP-N-acetyl-alpha-D-glucosamine site; that span reads TGG.

It belongs to the glycosyltransferase 28 family. MurG subfamily.

The protein localises to the cell inner membrane. The catalysed reaction is di-trans,octa-cis-undecaprenyl diphospho-N-acetyl-alpha-D-muramoyl-L-alanyl-D-glutamyl-meso-2,6-diaminopimeloyl-D-alanyl-D-alanine + UDP-N-acetyl-alpha-D-glucosamine = di-trans,octa-cis-undecaprenyl diphospho-[N-acetyl-alpha-D-glucosaminyl-(1-&gt;4)]-N-acetyl-alpha-D-muramoyl-L-alanyl-D-glutamyl-meso-2,6-diaminopimeloyl-D-alanyl-D-alanine + UDP + H(+). It participates in cell wall biogenesis; peptidoglycan biosynthesis. In terms of biological role, cell wall formation. Catalyzes the transfer of a GlcNAc subunit on undecaprenyl-pyrophosphoryl-MurNAc-pentapeptide (lipid intermediate I) to form undecaprenyl-pyrophosphoryl-MurNAc-(pentapeptide)GlcNAc (lipid intermediate II). The sequence is that of UDP-N-acetylglucosamine--N-acetylmuramyl-(pentapeptide) pyrophosphoryl-undecaprenol N-acetylglucosamine transferase from Trichlorobacter lovleyi (strain ATCC BAA-1151 / DSM 17278 / SZ) (Geobacter lovleyi).